Reading from the N-terminus, the 258-residue chain is Transcription initiation factor TFIID subunit 9B (258 aa).

M1 bears the N-acetylmethionine mark. Position 147 is a phosphoserine (S147). A phosphothreonine mark is found at T159 and T174. S177 bears the Phosphoserine mark. Polar residues predominate over residues 227-236 (SSQSTATDSN). The interval 227-258 (SSQSTATDSNPLKRKHDDDDDDDDDDDDNDTM) is disordered. Positions 244 to 258 (DDDDDDDDDDDNDTM) are enriched in acidic residues.

It belongs to the TAF9 family. Binds TAF5 and TAF6. Component of TFIID and the TATA-binding protein-free TAF complex (TFTC). TFIID is composed of TATA binding protein (TBP) and a number of TBP-associated factors (TAFs). Binds N-terminal domain of p53/TP53 which is essential for transcription.

The protein resides in the nucleus. Its function is as follows. Essential for cell viability. TAF9 and TAF9L are involved in transcriptional activation as well as repression of distinct but overlapping sets of genes. May have a role in gene regulation associated with apoptosis. TAFs are components of the transcription factor IID (TFIID) complex, the TBP-free TAFII complex (TFTC), the PCAF histone acetylase complex and the STAGA transcription coactivator-HAT complex. TFIID or TFTC are essential for the regulation of RNA polymerase II-mediated transcription. This Rattus norvegicus (Rat) protein is Transcription initiation factor TFIID subunit 9B (Taf9b).